The following is a 232-amino-acid chain: Large ribosomal subunit protein uL1 (232 aa).

It belongs to the universal ribosomal protein uL1 family. In terms of assembly, part of the 50S ribosomal subunit.

Its function is as follows. Binds directly to 23S rRNA. The L1 stalk is quite mobile in the ribosome, and is involved in E site tRNA release. In terms of biological role, protein L1 is also a translational repressor protein, it controls the translation of the L11 operon by binding to its mRNA. The chain is Large ribosomal subunit protein uL1 from Cereibacter sphaeroides (strain ATCC 17029 / ATH 2.4.9) (Rhodobacter sphaeroides).